Reading from the N-terminus, the 101-residue chain is Putative metal transport protein HQ_3622A (101 aa).

Residues 1 to 32 (MKIISMSMDSWIQRAALMLLGLVIVAPFFGWT) form the signal peptide. The helical transmembrane segment at 75–95 (IGTLISAGVGTVLTLIVAFGA) threads the bilayer.

Its subcellular location is the cell membrane. Its function is as follows. May be involved in metal transport. The protein is Putative metal transport protein HQ_3622A of Haloquadratum walsbyi (strain DSM 16790 / HBSQ001).